The primary structure comprises 319 residues: GTPase Era (319 aa).

The Era-type G domain maps to 9-196 (RSGVSLIIGR…MRTLRDLLPE (188 aa)). Positions 17-24 (GRPSSGKS) are G1. 17 to 24 (GRPSSGKS) contributes to the GTP binding site. A G2 region spans residues 43 to 47 (QTTRN). Positions 64–67 (DTPG) are G3. GTP-binding positions include 64-68 (DTPGY) and 127-130 (NKVD). A G4 region spans residues 127 to 130 (NKVD). The G5 stretch occupies residues 175–177 (ISA). In terms of domain architecture, KH type-2 spans 227 to 303 (CRDELPHALY…HISLDIRVKV (77 aa)).

The protein belongs to the TRAFAC class TrmE-Era-EngA-EngB-Septin-like GTPase superfamily. Era GTPase family. As to quaternary structure, monomer.

It localises to the cytoplasm. It is found in the cell inner membrane. An essential GTPase that binds both GDP and GTP, with rapid nucleotide exchange. Plays a role in 16S rRNA processing and 30S ribosomal subunit biogenesis and possibly also in cell cycle regulation and energy metabolism. In Treponema pallidum (strain Nichols), this protein is GTPase Era.